The chain runs to 306 residues: MKHFLTLRDFSKEEILSLVNHASELKKEPKKLLQDKTLAMIFEKNSTRTRMAFELAITELGGKALFLSSNDLQLSRGEPVKDTARVIGAMVDFVMMRVNKHETLLEFARYSKAPVINALSELYHPTQVLGDLFTIKEWNKMQNGIAKVAFIGDSNNMCNSWLITAAILGFEISIAMPKNYKISPEIWEFAMKQALISGAKISLGYDKFEALKDKDVVITDTWVSMGEENEKERKIKEFEGFMIDEKAMSVANKDAILLHCLPAYRGYEVSEEIFEKHADVIFEEARNRLYVVKALLCFLDNQRGRE.

Carbamoyl phosphate-binding positions include 46–49, glutamine 73, arginine 97, and 124–127; these read STRT and HPTQ. L-ornithine-binding positions include asparagine 156, aspartate 220, and 224–225; that span reads SM. Carbamoyl phosphate-binding positions include 260 to 261 and arginine 288; that span reads CL.

Belongs to the aspartate/ornithine carbamoyltransferase superfamily. OTCase family. Homohexamer; dimer of trimers.

It is found in the cytoplasm. The catalysed reaction is carbamoyl phosphate + L-ornithine = L-citrulline + phosphate + H(+). The protein operates within amino-acid biosynthesis; L-arginine biosynthesis; L-arginine from L-ornithine and carbamoyl phosphate: step 1/3. Its function is as follows. Reversibly catalyzes the transfer of the carbamoyl group from carbamoyl phosphate (CP) to the N(epsilon) atom of ornithine (ORN) to produce L-citrulline, which is a substrate for argininosuccinate synthetase (ArgG) involved in the final step in arginine biosynthesis. The polypeptide is Ornithine carbamoyltransferase, anabolic (Campylobacter jejuni subsp. jejuni serotype O:2 (strain ATCC 700819 / NCTC 11168)).